The chain runs to 119 residues: Ribonuclease P protein component (119 aa).

It belongs to the RnpA family. As to quaternary structure, consists of a catalytic RNA component (M1 or rnpB) and a protein subunit.

The catalysed reaction is Endonucleolytic cleavage of RNA, removing 5'-extranucleotides from tRNA precursor.. Functionally, RNaseP catalyzes the removal of the 5'-leader sequence from pre-tRNA to produce the mature 5'-terminus. It can also cleave other RNA substrates such as 4.5S RNA. The protein component plays an auxiliary but essential role in vivo by binding to the 5'-leader sequence and broadening the substrate specificity of the ribozyme. This chain is Ribonuclease P protein component, found in Haemophilus influenzae (strain 86-028NP).